We begin with the raw amino-acid sequence, 296 residues long: ATP-dependent ribose-1-phosphate kinase (296 aa).

Catalysis depends on aspartate 242, which acts as the Proton acceptor.

It belongs to the carbohydrate kinase PfkB family. It depends on Mg(2+) as a cofactor.

The catalysed reaction is alpha-D-ribose 1-phosphate + ATP = alpha-D-ribose 1,5-bisphosphate + ADP + H(+). With respect to regulation, requires salt for kinase activity. 2.0 M is the optimal KCl concentration. Its function is as follows. Kinase involved in the non-carboxylating pentose bisphosphate pathway, a nucleoside degradation pathway present in some halophilic archaea. Catalyzes the ATP-dependent phosphorylation of ribose 1-phosphate (R1P) to ribose 1,5-bisphosphate (R15P). Shows weak activity towards various other phosphate acceptors, such as xylulose, 2'-deoxyguanosine and D-ribulose. ATP is the most preferred phosphate donor, followed by CTP and GTP. This chain is ATP-dependent ribose-1-phosphate kinase, found in Halopiger xanaduensis (strain DSM 18323 / JCM 14033 / SH-6).